The primary structure comprises 350 residues: MALEQNQSTDYYYEENEMNGTYDYSQYELICIKEDVREFAKVFLPVFLTIVFVIGLAGNSMVVAIYAYYKKQRTKTDVYILNLAVADLLLLFTLPFWAVNAVHGWVLGKIMCKITSALYTLNFVSGMQFLACISIDRYVAVTKVPSQSGVGKPCWIICFCVWMAAILLSIPQLVFYTVNDNARCIPIFPRYLGTSMKALIQMLEICIGFVVPFLIMGVCYFITARTLMKMPNIKISRPLKVLLTVVIVFIVTQLPYNIVKFCRAIDIIYSLITSCNMSKRMDIAIQVTESIALFHSCLNPILYVFMGASFKNYVMKVAKKYGSWRRQRQSVEEFPFDSEGPTEPTSTFSI.

Over 1–42 the chain is Extracellular; it reads MALEQNQSTDYYYEENEMNGTYDYSQYELICIKEDVREFAKV. N-linked (GlcNAc...) asparagine glycosylation is found at Asn-6 and Asn-19. Residues 43–63 traverse the membrane as a helical segment; sequence FLPVFLTIVFVIGLAGNSMVV. Residues 64-87 are Cytoplasmic-facing; that stretch reads AIYAYYKKQRTKTDVYILNLAVAD. Residues 88–108 traverse the membrane as a helical segment; it reads LLLLFTLPFWAVNAVHGWVLG. Residues 109–113 lie on the Extracellular side of the membrane; sequence KIMCK. An intrachain disulfide couples Cys-112 to Cys-184. Residues 114-134 traverse the membrane as a helical segment; it reads ITSALYTLNFVSGMQFLACIS. Topologically, residues 135-154 are cytoplasmic; it reads IDRYVAVTKVPSQSGVGKPC. A helical membrane pass occupies residues 155-175; that stretch reads WIICFCVWMAAILLSIPQLVF. Topologically, residues 176-201 are extracellular; that stretch reads YTVNDNARCIPIFPRYLGTSMKALIQ. The helical transmembrane segment at 202 to 222 threads the bilayer; the sequence is MLEICIGFVVPFLIMGVCYFI. Residues 223 to 240 lie on the Cytoplasmic side of the membrane; the sequence is TARTLMKMPNIKISRPLK. The helical transmembrane segment at 241–261 threads the bilayer; sequence VLLTVVIVFIVTQLPYNIVKF. Topologically, residues 262–289 are extracellular; sequence CRAIDIIYSLITSCNMSKRMDIAIQVTE. Residues 290–310 form a helical membrane-spanning segment; it reads SIALFHSCLNPILYVFMGASF. Residues 311 to 350 are Cytoplasmic-facing; it reads KNYVMKVAKKYGSWRRQRQSVEEFPFDSEGPTEPTSTFSI.

Belongs to the G-protein coupled receptor 1 family. Atypical chemokine receptor subfamily. Forms heteromers with CXCR3. Interacts with ARRB1 and ARRB2. Post-translationally, the Ser/Thr residues in the C-terminal cytoplasmic tail may be phosphorylated. As to expression, predominantly expressed in heart. Lower expression in lung, pancreas, spleen, colon, skeletal muscle and small intestine.

The protein resides in the early endosome. The protein localises to the recycling endosome. It is found in the cell membrane. Atypical chemokine receptor that controls chemokine levels and localization via high-affinity chemokine binding that is uncoupled from classic ligand-driven signal transduction cascades, resulting instead in chemokine sequestration, degradation, or transcytosis. Also known as interceptor (internalizing receptor) or chemokine-scavenging receptor or chemokine decoy receptor. Acts as a receptor for chemokines CCL2, CCL8, CCL13, CCL19, CCL21 and CCL25. Chemokine-binding does not activate G-protein-mediated signal transduction but instead induces beta-arrestin recruitment, leading to ligand internalization. Plays an important role in controlling the migration of immune and cancer cells that express chemokine receptors CCR7 and CCR9, by reducing the availability of CCL19, CCL21, and CCL25 through internalization. Negatively regulates CXCR3-induced chemotaxis. Regulates T-cell development in the thymus. This is Atypical chemokine receptor 4 (ACKR4) from Homo sapiens (Human).